Reading from the N-terminus, the 270-residue chain is MANTRAISSGAKPVMVLKVGGALLQCEMGMARLMEAAAKIIANGQPIIMVHGGGCLVDEQLKANGMTTKKLDGLRVTPQEQIPVIVGALAGTSNKTLQAAAIKAGVTSLGMSLADAGMMSAKVKDPQLGLVGEVEPKDASYLEFVLSKGWMPIVSSIAISEQGEMLNVNADQAATALAKLVSGSLVLLSDVSGVLDGKGQLISSLNRAQVNELTKIGVIEKGMKVKVEAALDVAESMGQAVQIASWRHAQQLIALSRGETVGTQIQPQIQ.

Residues 53 to 54, Arg-75, and Asn-167 contribute to the substrate site; that span reads GG.

This sequence belongs to the acetylglutamate kinase family. ArgB subfamily.

It localises to the cytoplasm. It catalyses the reaction N-acetyl-L-glutamate + ATP = N-acetyl-L-glutamyl 5-phosphate + ADP. Its pathway is amino-acid biosynthesis; L-arginine biosynthesis; N(2)-acetyl-L-ornithine from L-glutamate: step 2/4. Functionally, catalyzes the ATP-dependent phosphorylation of N-acetyl-L-glutamate. The sequence is that of Acetylglutamate kinase from Shewanella halifaxensis (strain HAW-EB4).